The chain runs to 156 residues: Snaclec A15 (156 aa).

The N-terminal stretch at 1–23 (MGRFIFVRFGLLVVFLSLSGTGA) is a signal peptide. 3 disulfide bridges follow: Cys27-Cys38, Cys55-Cys152, and Cys127-Cys144. In terms of domain architecture, C-type lectin spans 34–153 (YDQHCYKAFD…CGDDYPFVCK (120 aa)). Asn141 carries N-linked (GlcNAc...) asparagine glycosylation.

This sequence belongs to the snaclec family. In terms of assembly, heterodimer; disulfide-linked. Expressed by the venom gland.

The protein localises to the secreted. In terms of biological role, interferes with one step of hemostasis (modulation of platelet aggregation, or coagulation cascade, for example). The polypeptide is Snaclec A15 (Macrovipera lebetinus (Levantine viper)).